The chain runs to 211 residues: Urease accessory protein UreG (211 aa).

GTP is bound at residue 11-18 (GPVGSGKT).

The protein belongs to the SIMIBI class G3E GTPase family. UreG subfamily. In terms of assembly, homodimer. UreD, UreF and UreG form a complex that acts as a GTP-hydrolysis-dependent molecular chaperone, activating the urease apoprotein by helping to assemble the nickel containing metallocenter of UreC. The UreE protein probably delivers the nickel.

The protein resides in the cytoplasm. Facilitates the functional incorporation of the urease nickel metallocenter. This process requires GTP hydrolysis, probably effectuated by UreG. This chain is Urease accessory protein UreG, found in Photorhabdus laumondii subsp. laumondii (strain DSM 15139 / CIP 105565 / TT01) (Photorhabdus luminescens subsp. laumondii).